A 295-amino-acid chain; its full sequence is Phosphatidylserine decarboxylase proenzyme (295 aa).

Catalysis depends on charge relay system; for autoendoproteolytic cleavage activity residues aspartate 113, histidine 169, and serine 256. The Schiff-base intermediate with substrate; via pyruvic acid; for decarboxylase activity role is filled by serine 256. Serine 256 carries the post-translational modification Pyruvic acid (Ser); by autocatalysis.

The protein belongs to the phosphatidylserine decarboxylase family. PSD-B subfamily. Prokaryotic type II sub-subfamily. In terms of assembly, heterodimer of a large membrane-associated beta subunit and a small pyruvoyl-containing alpha subunit. Pyruvate is required as a cofactor. In terms of processing, is synthesized initially as an inactive proenzyme. Formation of the active enzyme involves a self-maturation process in which the active site pyruvoyl group is generated from an internal serine residue via an autocatalytic post-translational modification. Two non-identical subunits are generated from the proenzyme in this reaction, and the pyruvate is formed at the N-terminus of the alpha chain, which is derived from the carboxyl end of the proenzyme. The autoendoproteolytic cleavage occurs by a canonical serine protease mechanism, in which the side chain hydroxyl group of the serine supplies its oxygen atom to form the C-terminus of the beta chain, while the remainder of the serine residue undergoes an oxidative deamination to produce ammonia and the pyruvoyl prosthetic group on the alpha chain. During this reaction, the Ser that is part of the protease active site of the proenzyme becomes the pyruvoyl prosthetic group, which constitutes an essential element of the active site of the mature decarboxylase.

It is found in the cell membrane. It catalyses the reaction a 1,2-diacyl-sn-glycero-3-phospho-L-serine + H(+) = a 1,2-diacyl-sn-glycero-3-phosphoethanolamine + CO2. It participates in phospholipid metabolism; phosphatidylethanolamine biosynthesis; phosphatidylethanolamine from CDP-diacylglycerol: step 2/2. Functionally, catalyzes the formation of phosphatidylethanolamine (PtdEtn) from phosphatidylserine (PtdSer). The sequence is that of Phosphatidylserine decarboxylase proenzyme from Clostridium botulinum (strain ATCC 19397 / Type A).